We begin with the raw amino-acid sequence, 634 residues long: Transmembrane and coiled-coil domain-containing protein 4 (634 aa).

The stretch at 150–190 forms a coiled coil; it reads EELDVLEEMFLESLKEIKEEESEMAEASRKKKENRRKWKRY. The next 3 membrane-spanning stretches (helical) occupy residues 203 to 223, 231 to 251, and 346 to 366; these read VIGV…ATII, LGSA…GAGL, and LSGI…ANVI. A disordered region spans residues 542–612; that stretch reads EPRQAAAAAS…ERPPICSHGM (71 aa). Polar residues predominate over residues 552–583; it reads SGETPHQVGQTQGPISGDTSKLAMSTDPSQAQ.

Belongs to the TMCO4 family.

Its subcellular location is the membrane. The chain is Transmembrane and coiled-coil domain-containing protein 4 (TMCO4) from Homo sapiens (Human).